A 311-amino-acid chain; its full sequence is Probable inactive peptidyl-prolyl cis-trans isomerase-like 6 (311 aa).

Positions 145-308 constitute a PPIase cyclophilin-type domain; the sequence is FLDICIDSSP…HMCRITDSGD (164 aa).

This sequence belongs to the cyclophilin-type PPIase family.

Its function is as follows. Probable inactive PPIase with no peptidyl-prolyl cis-trans isomerase activity. This Homo sapiens (Human) protein is Probable inactive peptidyl-prolyl cis-trans isomerase-like 6.